The primary structure comprises 856 residues: Translation initiation factor IF-2 (856 aa).

The tr-type G domain maps to 356–526 (PRAPVVTVMG…LLIADLLELK (171 aa)). The segment at 365–372 (GHVDHGKT) is G1. 365–372 (GHVDHGKT) contributes to the GTP binding site. Residues 390–394 (GITQH) form a G2 region. Positions 412 to 415 (DTPG) are G3. Residues 412–416 (DTPGH) and 466–469 (NKID) each bind GTP. The tract at residues 466 to 469 (NKID) is G4. Positions 502-504 (SAK) are G5.

This sequence belongs to the TRAFAC class translation factor GTPase superfamily. Classic translation factor GTPase family. IF-2 subfamily.

It is found in the cytoplasm. One of the essential components for the initiation of protein synthesis. Protects formylmethionyl-tRNA from spontaneous hydrolysis and promotes its binding to the 30S ribosomal subunits. Also involved in the hydrolysis of GTP during the formation of the 70S ribosomal complex. This Ehrlichia ruminantium (strain Welgevonden) protein is Translation initiation factor IF-2.